The chain runs to 845 residues: Beta-glucosidase B (845 aa).

An N-linked (GlcNAc...) asparagine glycan is attached at N202. D230 is a catalytic residue. The N-linked (GlcNAc...) asparagine glycan is linked to N235. Residues 406 to 557 (EGQPGWTLDF…HNRDLLSEAV (152 aa)) form the PA14 domain. N-linked (GlcNAc...) asparagine glycosylation is found at N591, N612, and N794.

The protein belongs to the glycosyl hydrolase 3 family.

The catalysed reaction is Hydrolysis of terminal, non-reducing beta-D-glucosyl residues with release of beta-D-glucose.. It participates in glycan metabolism; cellulose degradation. Its function is as follows. Beta-glucosidases are one of a number of cellulolytic enzymes involved in the degradation of cellulosic biomass. Catalyzes the last step releasing glucose from the inhibitory cellobiose. The polypeptide is Beta-glucosidase B (bglB) (Emericella nidulans (strain FGSC A4 / ATCC 38163 / CBS 112.46 / NRRL 194 / M139) (Aspergillus nidulans)).